Consider the following 515-residue polypeptide: Cytosolic Fe-S cluster assembly factor NAR1 homolog (515 aa).

The [4Fe-4S] cluster site is built by Cys19, Cys65, Cys68, Cys71, Cys192, Cys247, Cys428, and Cys432.

This sequence belongs to the NARF family.

Functionally, component of the cytosolic Fe/S protein assembly machinery. Required for maturation of extramitochondrial Fe/S proteins. May play a role in the transfer of pre-assembled Fe/S clusters to target apoproteins. This chain is Cytosolic Fe-S cluster assembly factor NAR1 homolog, found in Schizosaccharomyces japonicus (strain yFS275 / FY16936) (Fission yeast).